Consider the following 140-residue polypeptide: Nucleoside diphosphate kinase (140 aa).

Lys-11, Phe-59, Arg-87, Thr-93, Arg-104, and Asn-114 together coordinate ATP. Residue His-117 is the Pros-phosphohistidine intermediate of the active site.

It belongs to the NDK family. Homotetramer. Mg(2+) is required as a cofactor.

It localises to the cytoplasm. It catalyses the reaction a 2'-deoxyribonucleoside 5'-diphosphate + ATP = a 2'-deoxyribonucleoside 5'-triphosphate + ADP. It carries out the reaction a ribonucleoside 5'-diphosphate + ATP = a ribonucleoside 5'-triphosphate + ADP. In terms of biological role, major role in the synthesis of nucleoside triphosphates other than ATP. The ATP gamma phosphate is transferred to the NDP beta phosphate via a ping-pong mechanism, using a phosphorylated active-site intermediate. The sequence is that of Nucleoside diphosphate kinase from Rickettsia bellii (strain OSU 85-389).